Here is a 420-residue protein sequence, read N- to C-terminus: ATP phosphoribosyltransferase regulatory subunit (420 aa).

The protein belongs to the class-II aminoacyl-tRNA synthetase family. HisZ subfamily. In terms of assembly, heteromultimer composed of HisG and HisZ subunits.

It is found in the cytoplasm. The protein operates within amino-acid biosynthesis; L-histidine biosynthesis; L-histidine from 5-phospho-alpha-D-ribose 1-diphosphate: step 1/9. Required for the first step of histidine biosynthesis. May allow the feedback regulation of ATP phosphoribosyltransferase activity by histidine. This chain is ATP phosphoribosyltransferase regulatory subunit, found in Synechococcus sp. (strain ATCC 27144 / PCC 6301 / SAUG 1402/1) (Anacystis nidulans).